Consider the following 2924-residue polypeptide: Zinc finger ZZ-type and EF-hand domain-containing protein 1 (2924 aa).

Positions 1–41 (MGNAPSNSSEDEAAAAGGEGWSPHQDWAADSGTTPGPGPAA) are disordered. A lipid anchor (N-myristoyl glycine) is attached at glycine 2. The span at 28–41 (AADSGTTPGPGPAA) shows a compositional bias: low complexity. An EF-hand domain is found at 111–146 (CSGEQFEEAFAQFDAEGDGTVDAENMLEALKNSSGA). The 180-residue stretch at 226–405 (LVQKEKESPG…AIWYWSLLTS (180 aa)) folds into the DOC domain. The residue at position 240 (serine 240) is a Phosphoserine. The segment covering 1452–1470 (HLQPLDRRQRTSSVVEEHF) has biased composition (basic and acidic residues). Residues 1452 to 1527 (HLQPLDRRQR…STPTRRPPFT (76 aa)) form a disordered region. Residues 1472–1485 (GSASPTEAATPAAG) are compositionally biased toward low complexity. Phosphoserine is present on residues serine 1475, serine 1488, and serine 1509. Threonine 1510 bears the Phosphothreonine mark. Over residues 1514–1523 (PSPPSTPTRR) the composition is skewed to pro residues. At serine 1515 the chain carries Phosphoserine. Threonine 1519 and threonine 1521 each carry phosphothreonine. 2 positions are modified to phosphoserine: serine 1535 and serine 1538. ZZ-type zinc fingers lie at residues 1776–1831 (NVDI…FTCD) and 1825–1880 (NMEF…MVTI). Residues cysteine 1781, cysteine 1784, cysteine 1795, cysteine 1798, cysteine 1804, cysteine 1807, histidine 1817, histidine 1821, cysteine 1830, cysteine 1833, cysteine 1844, cysteine 1847, cysteine 1853, cysteine 1856, histidine 1866, and histidine 1870 each coordinate Zn(2+). Residues 2388–2418 (DLELDERGDQEEELDRPVSSPGEAEQKKLDP) form a disordered region. Serine 2407 bears the Phosphoserine mark. The residue at position 2630 (lysine 2630) is an N6-acetyllysine.

Interacts with KLF6 and KLF9. Interacts via (ZZ-type 2 zinc finger) with histone H3 trimethylated at 'Lys-4' (H3K4me3) and histone H3 acetylated at 'Lys-4' (H3K4ac).

In terms of biological role, histone H3 reader which may act as a transcriptional coactivator for KLF6 and KLF9 transcription factors. The polypeptide is Zinc finger ZZ-type and EF-hand domain-containing protein 1 (Zzef1) (Mus musculus (Mouse)).